The sequence spans 310 residues: p-hydroxybenzoic acid efflux pump subunit AaeA (310 aa).

The chain crosses the membrane as a helical span at residues 12–32 (AITVVLVILAFIAIFNAWVYY).

It belongs to the membrane fusion protein (MFP) (TC 8.A.1) family.

Its subcellular location is the cell inner membrane. Forms an efflux pump with AaeB. This is p-hydroxybenzoic acid efflux pump subunit AaeA from Escherichia coli O7:K1 (strain IAI39 / ExPEC).